The following is a 294-amino-acid chain: MDTNKAKKLKVMNQLVEGHDLTTQLQQLLSQPGSGLEDLVAKILVCFNNTISVLDTFEPISSSSSLAAVEGSQNASCDNDGKFEDSGDSRKRLGPVKGKRGCYKRKKRSETCTIESTILEDAFSWRKYGQKEILNAKFPRSYFRCTHKYTQGCKATKQVQKVELEPKMFSITYIGNHTCNTNAETPKSKTCDHHDEIFMDSEDHKSPSLSTSMKEEDNPHRHHGSSTENDLSLVWPEMVFEEDYHHQASYVNGKTSTSIDVLGSQDLMVFGGGGDFEFSENEHFSIFSSCSNLS.

Residues 72 to 94 (SQNASCDNDGKFEDSGDSRKRLG) form a disordered region. A compositionally biased stretch (basic and acidic residues) spans 79 to 91 (NDGKFEDSGDSRK). The Nuclear localization signal motif lies at 90–97 (RKRLGPVK). Positions 114-182 (IESTILEDAF…YIGNHTCNTN (69 aa)) form a DNA-binding region, WRKY. The disordered stretch occupies residues 201–229 (SEDHKSPSLSTSMKEEDNPHRHHGSSTEN).

The protein belongs to the WRKY group III family. In terms of assembly, interacts with WRKY30. Binds to BZR2/BES1 to cooperatively regulate the expression of target genes. Binds to unmodified (i.e. not sumoylated) NPR1. Phosphorylated and destabilized by ASK7/BIN2. As to expression, expressed in leaves and flowers.

The protein resides in the nucleus. In terms of biological role, transcription factor involved in senescence, biotic and abiotic stress responses by modulating various phytohormones signaling pathways. Interacts specifically with the W box (5'-(T)TGAC[CT]-3'), a frequently occurring elicitor-responsive cis-acting element. Binds to the 5'-[CT]GACTTTT-3' motif in promoters of target genes to induce their expression. Binding to the W-box element of PR-1 promoter is mediated by not-sumoylated NPR1 in the absence of salicylic acid. Plays an important but not indispensable role in jasmonate and salicylic acid signaling. Positively regulates the salicylic acid (SA)-mediated signal pathway, but negatively the jasmonic acid (JA)-mediated signal pathway, thus determining the balance between these mutually antagonistic pathways. Together with WRKY46, WRKY53 and WRKY54, prevents defense response to the necrotrophic pathogens P.carotovorum and B.cinerea, but promotes defense responses (including SA-induced pathogenesis-related (PR) genes expression) against biotrophic/hemibiotrophic SA-monitored pathogens (e.g. P.syringae, E.carotovora subsp. carotovora SCC3193 and E.cichoracearum), probably by regulating negatively the JA/ET and positively the SA signaling pathways. Contributes to the suppression of jasmonic acid (MeJA)-induced expression of JA-responsive genes (e.g. PDF1.2). Promotes susceptibility to JA-monitored pathogens (e.g. A.brassicicola), probably by facilitating SA-controlled suppression of JA-mediated defense. Represses the biosynthesis of the phytoalexin camalexin and indol-3-ylmethyl glucosinolate (IGS). Represses both SA and JA/ethylene (ET) mediated defense marker genes expression. Negative regulator of SA biosynthesis. Negative regulator of EDS1-dependent defense against E.amylovora. Required for RPP4-mediated disease resistance and basal defense against H.parasitica, probably via late up-regulation (LURP) of resistance genes (e.g. CML10/CaBP22 and LURP1). Probably involved in defense responses toward insects (e.g. P.xylostella and B.brassicae). Together with WRKY54, negative regulator of developmental senescence, probably via the regulation of several senescence-associated markers genes. Together with WRKY46 and WRKY54, promotes brassinosteroid (BR)-regulated plant growth but prevent drought response by modulating gene expression. In collaboration with WRKY54, prevents stomatal closure and, consequently, osmotic stress tolerance. Regulates rhizobacterium B.cereus AR156-induced systemic resistance (ISR) to P.syringae pv. tomato DC3000. The sequence is that of Probable WRKY transcription factor 70 from Arabidopsis thaliana (Mouse-ear cress).